We begin with the raw amino-acid sequence, 124 residues long: Small ribosomal subunit protein eS6 (124 aa).

Belongs to the eukaryotic ribosomal protein eS6 family.

This chain is Small ribosomal subunit protein eS6, found in Methanococcus maripaludis (strain C6 / ATCC BAA-1332).